Reading from the N-terminus, the 299-residue chain is MMEIDLQKTFTWKIENFSGRKFPITSTVFSSGGCECYVLIRPKGDGFEDYLSLYLCVGNPKSLQPGWKRRASLHFIVLNQSGKEVHRTSERYGLFGPEIPGWGFRTALPLTKLQDRELLENNTLFIEVYIKVTEVVHEGDETRKDMLDFKGFNVLSSQIASVSPIFAKYPKFADDIKPTSKAVKTVYLKILLGLIKTVNKPPEIFSETELIKAYSSLIDLMEVGFRVKWLKSKLDEISLARKKKVDADAARVQELEGKVKNQVELDKEKTKSHVEPKMLSFKDYASPVSPWIPRRKRSD.

An MATH domain is found at 7 to 130 (QKTFTWKIEN…NNTLFIEVYI (124 aa)). The stretch at 225–262 (FRVKWLKSKLDEISLARKKKVDADAARVQELEGKVKNQ) forms a coiled coil.

In Arabidopsis thaliana (Mouse-ear cress), this protein is MATH domain and coiled-coil domain-containing protein At2g42460.